The sequence spans 198 residues: MKKILVLYYSMYGHIERMAEAVAEGARSVPGVEVTLKRVPETMPEEVARKAGAKLDQAAPPAEPKELADYDAILFGTPTRFGNMAGQMRNFLDQTGGLWVSGALVGKFASVFTSTGTGGGSETTITSFWHTLAHHGMVIVGLPYVLPELSDVSEPRGGSPYGAATIAGADGSRRPSEKELILASFQGAHVARLVVRMQ.

In terms of domain architecture, Flavodoxin-like spans 4–190; that stretch reads ILVLYYSMYG…ILASFQGAHV (187 aa). FMN contacts are provided by residues 10–15 and 79–81; these read SMYGHI and TRF. Tyr-12 is an NAD(+) binding site. Residue Trp-99 coordinates substrate. FMN contacts are provided by residues 114–119 and His-134; that span reads STGTGG.

It belongs to the WrbA family. FMN is required as a cofactor.

The catalysed reaction is a quinone + NADH + H(+) = a quinol + NAD(+). It carries out the reaction a quinone + NADPH + H(+) = a quinol + NADP(+). The chain is NAD(P)H dehydrogenase (quinone) from Azotobacter vinelandii (strain DJ / ATCC BAA-1303).